The sequence spans 783 residues: Na(+)/H(+) exchanger protein 7 (783 aa).

Residues 1–18 (MWIKLLFFFTTLLVSTSG) form a helical membrane-spanning segment. Topologically, residues 19-108 (LGDDGITALL…WHWDYVKNEL (90 aa)) are extracellular. The chain crosses the membrane as a helical span at residues 109 to 129 (VLTLFFIVIGLFKLVYHHTFV). Over 130 to 132 (TRK) the chain is Cytoplasmic. A helical transmembrane segment spans residues 133–153 (ILPESCCLIFIGIAIGFFFVG). Topologically, residues 154–159 (DATHAS) are extracellular. A helical transmembrane segment spans residues 160–180 (IKFLEFKSKVFFFYLLPPIIL). Residues 181–206 (ESAYSLKDRAFIENIGTILLYAVVGT) lie on the Cytoplasmic side of the membrane. A helical membrane pass occupies residues 207 to 227 (ILNIVLLAAALLILIWVGIMG). At 228 to 235 (KYNLSVMD) the chain is on the extracellular side. Residues 236 to 256 (ILTFASLVAAVDPVAVLAVFQ) form a helical membrane-spanning segment. At 257–262 (EVGVNK) the chain is on the cytoplasmic side. Residues 263–283 (MLYFMVFGESLFNDAVTIVCY) form a helical membrane-spanning segment. Over 284–299 (NLAIEFQTLPDFTWYH) the chain is Extracellular. The chain crosses the membrane as a helical span at residues 300 to 320 (GFLGLLSFLCVSIGGLIIGLI). Residues 321-350 (CGAISSFVTKFTTDVRVVEPVVLFGMAYLA) lie on the Cytoplasmic side of the membrane. A helical membrane pass occupies residues 351 to 371 (YLGSEMFHFSGIIALIACGLF). Topologically, residues 372 to 390 (QTHYACCNISYKSFTSVMY) are extracellular. Residue Asn-379 is glycosylated (N-linked (GlcNAc...) asparagine). The segment at residues 391 to 411 (ITKVCSTLCESLIFIILGVML) is an intramembrane region (helical). At 412–424 (VNEREWFWTDWHP) the chain is on the extracellular side. The helical transmembrane segment at 425-445 (VFSAVSVVLCVVVRFGVTFFL) threads the bilayer. At 446–464 (TYFVNQFTGGVRHISFQEQ) the chain is on the cytoplasmic side. The helical transmembrane segment at 465 to 485 (FIMSYGGLRGAVSFSLVFMIS) threads the bilayer. At 486-492 (ANPDVKN) the chain is on the extracellular side. A helical transmembrane segment spans residues 493-513 (TMLGATYAVILFTNIIQGSTI). Residues 514-783 (KLFVKWLNIR…TITESEETSF (270 aa)) are Cytoplasmic-facing. Residues 649 to 702 (DNEDADQRANELIKDVSSIRQLMHNPFEDCYLDRNLTHEEEKEQARLKMKKTRA) are a coiled coil. The segment at 745-783 (RPSTSTRVSVEDEEQGLTMKEMEEEHPLMTITESEETSF) is disordered.

This sequence belongs to the monovalent cation:proton antiporter 1 (CPA1) transporter (TC 2.A.36) family. As to quaternary structure, interacts (via C-terminus) with cmd-1. Detected in the posterior cells of the intestine.

It is found in the basolateral cell membrane. Na+/H+ exchanger which mediates the transient acidification of the coelomic space and plays a role in contraction of posterior body muscles during defecation. Probably by regulating the defecation motor program, required for fatty acid uptake by intestinal cells. The sequence is that of Na(+)/H(+) exchanger protein 7 from Caenorhabditis elegans.